Consider the following 387-residue polypeptide: 4-hydroxy-3-methylbut-2-en-1-yl diphosphate synthase (flavodoxin) (387 aa).

[4Fe-4S] cluster is bound by residues C272, C275, C307, and E314.

It belongs to the IspG family. [4Fe-4S] cluster serves as cofactor.

It carries out the reaction (2E)-4-hydroxy-3-methylbut-2-enyl diphosphate + oxidized [flavodoxin] + H2O + 2 H(+) = 2-C-methyl-D-erythritol 2,4-cyclic diphosphate + reduced [flavodoxin]. The protein operates within isoprenoid biosynthesis; isopentenyl diphosphate biosynthesis via DXP pathway; isopentenyl diphosphate from 1-deoxy-D-xylulose 5-phosphate: step 5/6. Functionally, converts 2C-methyl-D-erythritol 2,4-cyclodiphosphate (ME-2,4cPP) into 1-hydroxy-2-methyl-2-(E)-butenyl 4-diphosphate. The polypeptide is 4-hydroxy-3-methylbut-2-en-1-yl diphosphate synthase (flavodoxin) (Granulibacter bethesdensis (strain ATCC BAA-1260 / CGDNIH1)).